Consider the following 208-residue polypeptide: Peptidyl-tRNA hydrolase 2 (208 aa).

Positions Ser32 to Leu45 are enriched in low complexity. The interval Ser32 to Leu81 is disordered. Residues Arg46–Asp58 show a composition bias toward basic and acidic residues. Residues Thr59–Glu77 show a composition bias toward acidic residues. A Glycyl lysine isopeptide (Lys-Gly) (interchain with G-Cter in ubiquitin) cross-link involves residue Lys152.

Belongs to the PTH2 family.

The protein resides in the cytoplasm. The catalysed reaction is an N-acyl-L-alpha-aminoacyl-tRNA + H2O = an N-acyl-L-amino acid + a tRNA + H(+). Its function is as follows. The natural substrate for this enzyme may be peptidyl-tRNAs which drop off the ribosome during protein synthesis. The sequence is that of Peptidyl-tRNA hydrolase 2 from Saccharomyces cerevisiae (strain ATCC 204508 / S288c) (Baker's yeast).